A 392-amino-acid chain; its full sequence is Probable tRNA sulfurtransferase (392 aa).

The region spanning 63–169 (GRAADAAADT…DAEAFVFLTH (107 aa)) is the THUMP domain. Residues 187–188 (LV), Arg270, Gly292, and Gln301 contribute to the ATP site.

This sequence belongs to the ThiI family.

The protein resides in the cytoplasm. It catalyses the reaction [ThiI sulfur-carrier protein]-S-sulfanyl-L-cysteine + a uridine in tRNA + 2 reduced [2Fe-2S]-[ferredoxin] + ATP + H(+) = [ThiI sulfur-carrier protein]-L-cysteine + a 4-thiouridine in tRNA + 2 oxidized [2Fe-2S]-[ferredoxin] + AMP + diphosphate. It carries out the reaction [ThiS sulfur-carrier protein]-C-terminal Gly-Gly-AMP + S-sulfanyl-L-cysteinyl-[cysteine desulfurase] + AH2 = [ThiS sulfur-carrier protein]-C-terminal-Gly-aminoethanethioate + L-cysteinyl-[cysteine desulfurase] + A + AMP + 2 H(+). The protein operates within cofactor biosynthesis; thiamine diphosphate biosynthesis. Its function is as follows. Catalyzes the ATP-dependent transfer of a sulfur to tRNA to produce 4-thiouridine in position 8 of tRNAs, which functions as a near-UV photosensor. Also catalyzes the transfer of sulfur to the sulfur carrier protein ThiS, forming ThiS-thiocarboxylate. This is a step in the synthesis of thiazole, in the thiamine biosynthesis pathway. The sulfur is donated as persulfide by IscS. This Halobacterium salinarum (strain ATCC 29341 / DSM 671 / R1) protein is Probable tRNA sulfurtransferase.